A 205-amino-acid chain; its full sequence is Pyridoxine/pyridoxamine 5'-phosphate oxidase (205 aa).

FMN-binding positions include 53 to 58 (RMVLLK), 68 to 69 (YT), K75, and Q97. A substrate-binding site is contributed by K58. Substrate-binding residues include Y115, R119, and S123. Residues 132-133 (QS) and W177 each bind FMN. Residue 183–185 (RLH) participates in substrate binding. An FMN-binding site is contributed by R187.

This sequence belongs to the pyridoxamine 5'-phosphate oxidase family. In terms of assembly, homodimer. FMN serves as cofactor.

The enzyme catalyses pyridoxamine 5'-phosphate + O2 + H2O = pyridoxal 5'-phosphate + H2O2 + NH4(+). It carries out the reaction pyridoxine 5'-phosphate + O2 = pyridoxal 5'-phosphate + H2O2. It participates in cofactor metabolism; pyridoxal 5'-phosphate salvage; pyridoxal 5'-phosphate from pyridoxamine 5'-phosphate: step 1/1. Its pathway is cofactor metabolism; pyridoxal 5'-phosphate salvage; pyridoxal 5'-phosphate from pyridoxine 5'-phosphate: step 1/1. Catalyzes the oxidation of either pyridoxine 5'-phosphate (PNP) or pyridoxamine 5'-phosphate (PMP) into pyridoxal 5'-phosphate (PLP). The polypeptide is Pyridoxine/pyridoxamine 5'-phosphate oxidase (Mesorhizobium japonicum (strain LMG 29417 / CECT 9101 / MAFF 303099) (Mesorhizobium loti (strain MAFF 303099))).